The following is a 200-amino-acid chain: Nitrile hydratase subunit alpha (200 aa).

The Fe(3+) site is built by Cys105, Cys108, Ser109, and Cys110. Cysteine sulfinic acid (-SO2H) is present on Cys108. Cysteine sulfenic acid (-SOH) is present on Cys110.

It belongs to the nitrile hydratase subunit alpha family. In terms of assembly, heterodimer of an alpha and a beta chain. The cofactor is Fe(3+). In terms of processing, oxidation on Cys-108 is essential for the activity. Oxidation on Cys-110 stabilizes the Fe-NO ligand coordinated in the inactive form.

The enzyme catalyses an aliphatic primary amide = an aliphatic nitrile + H2O. With respect to regulation, inactivated by oxidation of Cys-110 to a sulfenic acid. Functionally, NHase catalyzes the hydration of various nitrile compounds to the corresponding amides. Industrial production of acrylamide is now being developed using some of the enzymes of this class. The sequence is that of Nitrile hydratase subunit alpha (nthA) from Pseudomonas chlororaphis (Pseudomonas aureofaciens).